Consider the following 264-residue polypeptide: Probable septum site-determining protein MinC (264 aa).

Positions 103–147 (SHGRRPRGGNDAKDADRNDAQDAQGAPEHAQAAEAPASTSAIPPA) are disordered. The segment covering 110-122 (GGNDAKDADRNDA) has biased composition (basic and acidic residues). Residues 124 to 147 (DAQGAPEHAQAAEAPASTSAIPPA) are compositionally biased toward low complexity.

The protein belongs to the MinC family. Interacts with MinD and FtsZ.

Functionally, cell division inhibitor that blocks the formation of polar Z ring septums. Rapidly oscillates between the poles of the cell to destabilize FtsZ filaments that have formed before they mature into polar Z rings. Prevents FtsZ polymerization. The polypeptide is Probable septum site-determining protein MinC (Ralstonia pickettii (strain 12J)).